The primary structure comprises 152 residues: Large ribosomal subunit protein bL9 (152 aa).

This sequence belongs to the bacterial ribosomal protein bL9 family.

Its function is as follows. Binds to the 23S rRNA. This Synechococcus sp. (strain CC9605) protein is Large ribosomal subunit protein bL9.